We begin with the raw amino-acid sequence, 240 residues long: Uridylate kinase (240 aa).

13–16 (KLSG) serves as a coordination point for ATP. Positions 21-26 (GDKGFG) are involved in allosteric activation by GTP. Gly55 serves as a coordination point for UMP. ATP-binding residues include Gly56 and Arg60. UMP is bound by residues Asp75 and 136-143 (IGNPYFST). ATP-binding residues include Asn164, Tyr170, and Asp173.

The protein belongs to the UMP kinase family. As to quaternary structure, homohexamer.

It is found in the cytoplasm. It catalyses the reaction UMP + ATP = UDP + ADP. The protein operates within pyrimidine metabolism; CTP biosynthesis via de novo pathway; UDP from UMP (UMPK route): step 1/1. Allosterically activated by GTP. Inhibited by UTP. Catalyzes the reversible phosphorylation of UMP to UDP. This Staphylococcus epidermidis (strain ATCC 35984 / DSM 28319 / BCRC 17069 / CCUG 31568 / BM 3577 / RP62A) protein is Uridylate kinase.